A 109-amino-acid polypeptide reads, in one-letter code: ATP-dependent Clp protease adapter protein ClpS (109 aa).

The segment at 1–25 (MSERKEGDSGAGVRSAVITQTKPKT) is disordered.

This sequence belongs to the ClpS family. Binds to the N-terminal domain of the chaperone ClpA.

Involved in the modulation of the specificity of the ClpAP-mediated ATP-dependent protein degradation. The polypeptide is ATP-dependent Clp protease adapter protein ClpS (Phenylobacterium zucineum (strain HLK1)).